A 90-amino-acid polypeptide reads, in one-letter code: Probable Fe(2+)-trafficking protein (90 aa).

Belongs to the Fe(2+)-trafficking protein family. In terms of assembly, monomer.

Functionally, could be a mediator in iron transactions between iron acquisition and iron-requiring processes, such as synthesis and/or repair of Fe-S clusters in biosynthetic enzymes. This Serratia proteamaculans (strain 568) protein is Probable Fe(2+)-trafficking protein.